A 234-amino-acid polypeptide reads, in one-letter code: Demethylmenaquinone methyltransferase (234 aa).

Residues threonine 58, aspartate 79, and 106–107 (NA) contribute to the S-adenosyl-L-methionine site.

Belongs to the class I-like SAM-binding methyltransferase superfamily. MenG/UbiE family.

It carries out the reaction a 2-demethylmenaquinol + S-adenosyl-L-methionine = a menaquinol + S-adenosyl-L-homocysteine + H(+). Its pathway is quinol/quinone metabolism; menaquinone biosynthesis; menaquinol from 1,4-dihydroxy-2-naphthoate: step 2/2. Methyltransferase required for the conversion of demethylmenaquinol (DMKH2) to menaquinol (MKH2). The chain is Demethylmenaquinone methyltransferase from Geobacillus sp. (strain WCH70).